The chain runs to 2408 residues: Protein ELYS (2408 aa).

The segment at 1-492 (MQNLEAQVTG…SGLIHFACTG (492 aa)) is seven-bladed beta propeller repeats. Positions 1016–2408 (YSLPSLVWRE…AKPVTRRKMR (1393 aa)) are disordered. Over residues 1124–1145 (PLTSSDTDNNQTPHKSPLLKTS) the composition is skewed to polar residues. Residues 1457 to 1466 (NDQDSEEIEE) are compositionally biased toward acidic residues. 2 stretches are compositionally biased toward polar residues: residues 1705–1719 (INEG…QSTL) and 1735–1750 (PADS…TLPT). Residues 2136 to 2149 (QASKIQEDLSDTPR) show a composition bias toward basic and acidic residues. 2 sufficient for chromatin-binding regions span residues 2281 to 2359 (STQY…PVEI) and 2359 to 2408 (IKLI…RKMR). The tract at residues 2281–2408 (STQYVFSPPS…AKPVTRRKMR (128 aa)) is sufficient to block nuclear pore assembly. The a.T hook DNA-binding region spans 2329-2341 (SKPRGRPPKHKAK). Over residues 2331 to 2348 (PRGRPPKHKAKAVTRVLK) the composition is skewed to basic residues. Basic and acidic residues predominate over residues 2378–2389 (DSTEAKGAEKIS).

Belongs to the ELYS family. Interacts with the Nup107-160 subcomplex of the NPC.

The protein localises to the nucleus. The protein resides in the nuclear pore complex. It is found in the cytoplasm. Its subcellular location is the nucleoplasm. In terms of biological role, required for the assembly of a functional nuclear pore complex (NPC) on the surface of chromosomes as nuclei form at the end of mitosis. May initiate NPC assembly by binding to chromatin and recruiting the Nup107-160 subcomplex, which may in turn recruit membrane vesicles containing pom121 and tmem48/ndc1. Association with chromatin may require the presence of the mcm2-mcm7 complex, suggesting a mechanism for coordination of nuclear assembly and the inactivation of replication licensing. This chain is Protein ELYS (ahctf1), found in Xenopus laevis (African clawed frog).